Reading from the N-terminus, the 314-residue chain is Homoserine O-succinyltransferase (314 aa).

Residue Cys-142 is the Acyl-thioester intermediate of the active site. Substrate-binding residues include Lys-163 and Ser-192. The active-site Proton acceptor is His-235. Glu-237 is a catalytic residue. Arg-249 is a substrate binding site.

The protein belongs to the MetA family.

The protein resides in the cytoplasm. The enzyme catalyses L-homoserine + succinyl-CoA = O-succinyl-L-homoserine + CoA. It functions in the pathway amino-acid biosynthesis; L-methionine biosynthesis via de novo pathway; O-succinyl-L-homoserine from L-homoserine: step 1/1. Functionally, transfers a succinyl group from succinyl-CoA to L-homoserine, forming succinyl-L-homoserine. This is Homoserine O-succinyltransferase from Shewanella frigidimarina (strain NCIMB 400).